Consider the following 164-residue polypeptide: 3-isopropylmalate dehydratase small subunit (164 aa).

It belongs to the LeuD family. LeuD type 2 subfamily. As to quaternary structure, heterodimer of LeuC and LeuD.

The catalysed reaction is (2R,3S)-3-isopropylmalate = (2S)-2-isopropylmalate. It participates in amino-acid biosynthesis; L-leucine biosynthesis; L-leucine from 3-methyl-2-oxobutanoate: step 2/4. Its function is as follows. Catalyzes the isomerization between 2-isopropylmalate and 3-isopropylmalate, via the formation of 2-isopropylmaleate. In Syntrophus aciditrophicus (strain SB), this protein is 3-isopropylmalate dehydratase small subunit.